A 417-amino-acid polypeptide reads, in one-letter code: NADH-quinone oxidoreductase subunit D (417 aa).

The protein belongs to the complex I 49 kDa subunit family. As to quaternary structure, NDH-1 is composed of 14 different subunits. Subunits NuoB, C, D, E, F, and G constitute the peripheral sector of the complex.

The protein localises to the cell inner membrane. It carries out the reaction a quinone + NADH + 5 H(+)(in) = a quinol + NAD(+) + 4 H(+)(out). Functionally, NDH-1 shuttles electrons from NADH, via FMN and iron-sulfur (Fe-S) centers, to quinones in the respiratory chain. The immediate electron acceptor for the enzyme in this species is believed to be ubiquinone. Couples the redox reaction to proton translocation (for every two electrons transferred, four hydrogen ions are translocated across the cytoplasmic membrane), and thus conserves the redox energy in a proton gradient. The sequence is that of NADH-quinone oxidoreductase subunit D from Legionella pneumophila (strain Corby).